We begin with the raw amino-acid sequence, 489 residues long: Ketol-acid reductoisomerase (NADP(+)) (489 aa).

A KARI N-terminal Rossmann domain is found at 17–208 (LGVCEFMEQS…GGHKAGVLRS (192 aa)). Residues 45 to 48 (CGAQ), R68, R76, S78, and 108 to 110 (DKQ) each bind NADP(+). The active site involves H132. G158 is an NADP(+) binding site. KARI C-terminal knotted domains lie at 209 to 344 (SFVA…KTAP) and 345 to 485 (QEAP…MTAM). Mg(2+)-binding residues include D217, E221, E389, and E393. Substrate is bound at residue S414.

This sequence belongs to the ketol-acid reductoisomerase family. Mg(2+) is required as a cofactor.

The catalysed reaction is (2R)-2,3-dihydroxy-3-methylbutanoate + NADP(+) = (2S)-2-acetolactate + NADPH + H(+). It catalyses the reaction (2R,3R)-2,3-dihydroxy-3-methylpentanoate + NADP(+) = (S)-2-ethyl-2-hydroxy-3-oxobutanoate + NADPH + H(+). Its pathway is amino-acid biosynthesis; L-isoleucine biosynthesis; L-isoleucine from 2-oxobutanoate: step 2/4. It functions in the pathway amino-acid biosynthesis; L-valine biosynthesis; L-valine from pyruvate: step 2/4. Involved in the biosynthesis of branched-chain amino acids (BCAA). Catalyzes an alkyl-migration followed by a ketol-acid reduction of (S)-2-acetolactate (S2AL) to yield (R)-2,3-dihydroxy-isovalerate. In the isomerase reaction, S2AL is rearranged via a Mg-dependent methyl migration to produce 3-hydroxy-3-methyl-2-ketobutyrate (HMKB). In the reductase reaction, this 2-ketoacid undergoes a metal-dependent reduction by NADPH to yield (R)-2,3-dihydroxy-isovalerate. The chain is Ketol-acid reductoisomerase (NADP(+)) from Flavobacterium johnsoniae (strain ATCC 17061 / DSM 2064 / JCM 8514 / BCRC 14874 / CCUG 350202 / NBRC 14942 / NCIMB 11054 / UW101) (Cytophaga johnsonae).